The sequence spans 334 residues: Stabilizer of axonemal microtubules 3 (334 aa).

3 disordered regions span residues A81–T105, Y128–P153, and Q233–R260. A compositionally biased stretch (polar residues) spans Y128 to P141. A compositionally biased stretch (pro residues) spans Q240–P251.

In Homo sapiens (Human), this protein is Stabilizer of axonemal microtubules 3.